The following is a 235-amino-acid chain: Sugar fermentation stimulation protein homolog (235 aa).

This sequence belongs to the SfsA family.

The chain is Sugar fermentation stimulation protein homolog from Nitrosococcus oceani (strain ATCC 19707 / BCRC 17464 / JCM 30415 / NCIMB 11848 / C-107).